A 439-amino-acid chain; its full sequence is Proline--tRNA ligase (439 aa).

The protein belongs to the class-II aminoacyl-tRNA synthetase family. ProS type 2 subfamily. As to quaternary structure, homodimer.

Its subcellular location is the cytoplasm. The enzyme catalyses tRNA(Pro) + L-proline + ATP = L-prolyl-tRNA(Pro) + AMP + diphosphate. In terms of biological role, catalyzes the attachment of proline to tRNA(Pro) in a two-step reaction: proline is first activated by ATP to form Pro-AMP and then transferred to the acceptor end of tRNA(Pro). The polypeptide is Proline--tRNA ligase (Rhodopseudomonas palustris (strain BisB18)).